Here is a 445-residue protein sequence, read N- to C-terminus: MSGAYDESAMSDETTDSFWEVGNYKRTVKRIEDGHRLCNDMMSCIQERAKIEKAYSQQLTDWSKRWRQLVERGPQYGTLERAWLAVMTEAEKVSELHQEVKNNLLNEDLEKVKNWQKDAYHKQMMGGFKETKEADEGFRKAQKPWAKKLKELETAKKTYHMACKEEKIASAREANSKGEASVTTDQQKKLQEKVDKCKNDVQKAKEKYEKSLDELNKCTPQYMENMEVVFDQCQQFEEKRLNFLREVLLDTKRHLNLTESQSYATVYRELERTIVSASAQEDLKWFSSVHGPGMHMNWPQFEEFNPDLSHAISKKEKVKRNHDGVTLTQVTHGAEHGTPQTGDRGSVSSYEKNQQYSAEWSDDEQPPTAAQSASETNGGNPFEEDSKGVRVRALYDYEGQEQDELTFKAGDELTKLEDEDEQGWCKGRLDSGQLGLYPANYVEPV.

The 271-residue stretch at 12–282 (DETTDSFWEV…TIVSASAQED (271 aa)) folds into the F-BAR domain. Coiled-coil stretches lie at residues 146–167 (AKKL…KEEK) and 183–219 (TTDQ…NKCT). The disordered stretch occupies residues 327 to 390 (LTQVTHGAEH…PFEEDSKGVR (64 aa)). 2 stretches are compositionally biased toward polar residues: residues 338–358 (TPQT…QYSA) and 368–379 (TAAQSASETNGG). The SH3 domain maps to 386–445 (SKGVRVRALYDYEGQEQDELTFKAGDELTKLEDEDEQGWCKGRLDSGQLGLYPANYVEPV).

In terms of assembly, interacts with cobl.

The protein resides in the cytoplasm. It is found in the cytosol. Its subcellular location is the cell membrane. The protein localises to the cell projection. It localises to the synapse. The protein resides in the synaptosome. It is found in the cytoplasmic vesicle membrane. Its subcellular location is the ruffle membrane. The protein localises to the membrane. Its function is as follows. Binds to membranes via its F-BAR domain and mediates membrane tubulation. Plays a role in cellular transport processes by recruiting dynamins to membranes. Plays a role in the reorganization of the actin cytoskeleton and in neuron morphogenesis via its interaction with cobl, and by recruiting cobl to the cell cortex. Plays a role in the regulation of neurite formation, neurite branching and the regulation of neurite length. Required for normal synaptic vesicle endocytosis; this process retrieves previously released neurotransmitters to accommodate multiple cycles of neurotransmission. Required for normal excitatory and inhibitory synaptic transmission. Required for normal embryonic development, including normal development of laterality, normal body size and shape, as well as normal brain and heart development. Required for normal development of stereocilia and kinocilia in sensory hair cells of neuromasts in the posterior lateral line organ, and thus also for balance keeping and normal swimming behavior. The chain is Protein kinase C and casein kinase substrate in neurons protein 1 (pacsin1b) from Danio rerio (Zebrafish).